Here is a 1181-residue protein sequence, read N- to C-terminus: WD repeat-containing protein 35 (1181 aa).

WD repeat units lie at residues 4 to 43 (YLSK…VLKL), 61 to 100 (LSMN…VWML), 105 to 143 (WIEE…IVGS), 147 to 185 (NRIW…IYDN), 193 to 241 (MKLS…IMRH), and 246 to 288 (NPVL…IVQF).

As to quaternary structure, component of the IFT complex A (IFT-A) complex. IFT-A complex is divided into a core subcomplex composed of IFT122:IFT140:WDR19 which is associated with TULP3 and a peripheral subcomplex composed of IFT43:WDR35:TTC21B. Interacts directy with IFT122, ITF43 and TTC21B. Interacts with IFT43. Interacts with CFAP61.

The protein resides in the cytoplasm. Its subcellular location is the cytoskeleton. It localises to the microtubule organizing center. It is found in the centrosome. The protein localises to the cilium axoneme. The protein resides in the cilium basal body. Its function is as follows. As a component of the IFT complex A (IFT-A), a complex required for retrograde ciliary transport and entry into cilia of G protein-coupled receptors (GPCRs), it is involved in ciliogenesis and ciliary protein trafficking. May promote CASP3 activation and TNF-stimulated apoptosis. The chain is WD repeat-containing protein 35 from Homo sapiens (Human).